Reading from the N-terminus, the 450-residue chain is 3-phosphoshikimate 1-carboxyvinyltransferase (450 aa).

Lys23, Ser24, and Arg28 together coordinate 3-phosphoshikimate. Residue Lys23 participates in phosphoenolpyruvate binding. Residues Gly96 and Arg124 each contribute to the phosphoenolpyruvate site. Residues Ser167, Ser168, Gln169, Ser196, Glu311, and His340 each contribute to the 3-phosphoshikimate site. A phosphoenolpyruvate-binding site is contributed by Gln169. The Proton acceptor role is filled by Glu311. Positions 344, 385, and 410 each coordinate phosphoenolpyruvate. The tract at residues 426 to 450 is disordered; it reads GQGWGYPQPRSGQRARRATGQGSGG.

The protein belongs to the EPSP synthase family. In terms of assembly, monomer.

It localises to the cytoplasm. It carries out the reaction 3-phosphoshikimate + phosphoenolpyruvate = 5-O-(1-carboxyvinyl)-3-phosphoshikimate + phosphate. Its pathway is metabolic intermediate biosynthesis; chorismate biosynthesis; chorismate from D-erythrose 4-phosphate and phosphoenolpyruvate: step 6/7. In terms of biological role, catalyzes the transfer of the enolpyruvyl moiety of phosphoenolpyruvate (PEP) to the 5-hydroxyl of shikimate-3-phosphate (S3P) to produce enolpyruvyl shikimate-3-phosphate and inorganic phosphate. In Mycobacterium tuberculosis (strain ATCC 25177 / H37Ra), this protein is 3-phosphoshikimate 1-carboxyvinyltransferase.